A 351-amino-acid chain; its full sequence is uncharacterized protein (351 aa).

An N-terminal signal peptide occupies residues 1 to 27 (MKNKKRVLIASSLSCAILLLSAATTQA). A disordered region spans residues 27 to 71 (ANSAHKDSQDQNKKEHVDKSQQKDKRNVTNKDKNSTAPDDIGKNG). Positions 30–60 (AHKDSQDQNKKEHVDKSQQKDKRNVTNKDKN) are enriched in basic and acidic residues.

This sequence belongs to the aerolysin family.

This is an uncharacterized protein from Staphylococcus aureus (strain USA300).